A 419-amino-acid chain; its full sequence is Probable pectate lyase C (419 aa).

The first 19 residues, 1–19 (MRLTPSLISCLSLLHFTSA), serve as a signal peptide directing secretion. N-linked (GlcNAc...) asparagine glycosylation is found at Asn-48, Asn-164, and Asn-201. Arg-204 is a catalytic residue. An EF-hand domain is found at 261-296 (NENFHAYVETNYYDSDKDGTLNGSELGVDSTNYGGM). Ca(2+) contacts are provided by Asp-274, Asp-276, Asp-278, and Thr-280. An N-linked (GlcNAc...) asparagine glycan is attached at Asn-282. Glu-285 lines the Ca(2+) pocket. The disordered stretch occupies residues 350–395 (ALISDEADMGGAGDLDQGTTPTDTDGDGIPDDAEAELGTDPNTADS). Positions 363–372 (DLDQGTTPTD) are enriched in low complexity. Residues 373 to 386 (TDGDGIPDDAEAEL) show a composition bias toward acidic residues.

This sequence belongs to the polysaccharide lyase 1 family. The cofactor is Ca(2+).

Its subcellular location is the secreted. It carries out the reaction Eliminative cleavage of (1-&gt;4)-alpha-D-galacturonan to give oligosaccharides with 4-deoxy-alpha-D-galact-4-enuronosyl groups at their non-reducing ends.. Functionally, pectinolytic enzyme consist of four classes of enzymes: pectin lyase, polygalacturonase, pectin methylesterase and rhamnogalacturonase. Among pectinolytic enzymes, pectin lyase is the most important in depolymerization of pectin, since it cleaves internal glycosidic bonds of highly methylated pectins. Favors pectate, the anion, over pectin, the methyl ester. The polypeptide is Probable pectate lyase C (plyC) (Aspergillus flavus (strain ATCC 200026 / FGSC A1120 / IAM 13836 / NRRL 3357 / JCM 12722 / SRRC 167)).